The chain runs to 243 residues: GTP cyclohydrolase 1 (243 aa).

T15 bears the Phosphothreonine mark. Residues 18–55 (NIRPTSPYTLNPPVERDGFSWPSVGTRQRAEETEEEEK) form a disordered region. S23 carries the phosphoserine modification. Residues C132, H135, and C203 each coordinate Zn(2+).

The protein belongs to the GTP cyclohydrolase I family. Homodimer.

The enzyme catalyses GTP + H2O = 7,8-dihydroneopterin 3'-triphosphate + formate + H(+). It functions in the pathway cofactor biosynthesis; 7,8-dihydroneopterin triphosphate biosynthesis; 7,8-dihydroneopterin triphosphate from GTP: step 1/1. Functionally, GTP cyclohydrolase 1 is the first enzyme in the biosynthetic pathway leading to folic acid. The protein is GTP cyclohydrolase 1 of Saccharomyces cerevisiae (strain ATCC 204508 / S288c) (Baker's yeast).